The following is a 185-amino-acid chain: Kunitz-type serine protease inhibitor DrTI (185 aa).

Disulfide bonds link Cys44/Cys89 and Cys139/Cys147.

This sequence belongs to the protease inhibitor I3 (leguminous Kunitz-type inhibitor) family.

The protein localises to the secreted. Functionally, inhibits bovine trypsin and human plasma kallikrein. The polypeptide is Kunitz-type serine protease inhibitor DrTI (Delonix regia (Royal poinciana)).